The primary structure comprises 38 residues: Large ribosomal subunit protein bL36 (38 aa).

It belongs to the bacterial ribosomal protein bL36 family.

The sequence is that of Large ribosomal subunit protein bL36 from Chlorobium phaeobacteroides (strain BS1).